The primary structure comprises 192 residues: MSIQNEMPGYDEMNRFLNQQGAGLTPAEMHGLISGMICGGNNDSSWQPLLHDLTNEGLAFGHELAQALRKMHAATSDALEDDGFLFQLYLPEGDDVSVFDRADALAGWVNHFLLGLGVTQPKLDKVTGETGEAIDDLRNIAQLGYDESEDQEELEMSLEEIIEYVRVAALLCHDTFTRQQPTAPEVRKPTLH.

This sequence belongs to the UPF0149 family.

This is UPF0149 protein YgfB from Salmonella typhi.